A 238-amino-acid polypeptide reads, in one-letter code: Uridylate kinase (238 aa).

10–13 is an ATP binding site; that stretch reads KFSG. The interval 18-23 is involved in allosteric activation by GTP; that stretch reads GENGFG. Gly-52 contacts UMP. Residues Gly-53 and Arg-57 each contribute to the ATP site. UMP is bound by residues Asp-73 and 134 to 141; that span reads TGNPFFTT. Residues Thr-161, Tyr-167, and Asp-170 each coordinate ATP.

This sequence belongs to the UMP kinase family. In terms of assembly, homohexamer.

It localises to the cytoplasm. It carries out the reaction UMP + ATP = UDP + ADP. It participates in pyrimidine metabolism; CTP biosynthesis via de novo pathway; UDP from UMP (UMPK route): step 1/1. Its activity is regulated as follows. Allosterically activated by GTP. Inhibited by UTP. Functionally, catalyzes the reversible phosphorylation of UMP to UDP. The chain is Uridylate kinase from Campylobacter concisus (strain 13826).